We begin with the raw amino-acid sequence, 119 residues long: Ribonuclease P protein component (119 aa).

It belongs to the RnpA family. In terms of assembly, consists of a catalytic RNA component (M1 or rnpB) and a protein subunit.

The catalysed reaction is Endonucleolytic cleavage of RNA, removing 5'-extranucleotides from tRNA precursor.. In terms of biological role, RNaseP catalyzes the removal of the 5'-leader sequence from pre-tRNA to produce the mature 5'-terminus. It can also cleave other RNA substrates such as 4.5S RNA. The protein component plays an auxiliary but essential role in vivo by binding to the 5'-leader sequence and broadening the substrate specificity of the ribozyme. This is Ribonuclease P protein component from Salmonella arizonae (strain ATCC BAA-731 / CDC346-86 / RSK2980).